Reading from the N-terminus, the 237-residue chain is Class B acid phosphatase (237 aa).

An N-terminal signal peptide occupies residues 1–23 (MRKVTLVFSAIAFAFSLNGVVQA). The active-site Nucleophile is the D69. Residues D69 and D71 each contribute to the Mg(2+) site. Residue D71 is the Proton donor of the active site. Residues 137–138 (TG) and K177 contribute to the substrate site. D192 provides a ligand contact to Mg(2+).

This sequence belongs to the class B bacterial acid phosphatase family. As to quaternary structure, homotetramer. Requires Mg(2+) as cofactor.

Its subcellular location is the periplasm. It catalyses the reaction a phosphate monoester + H2O = an alcohol + phosphate. Functionally, dephosphorylates several organic phosphate monoesters. Also has a phosphotransferase activity catalyzing the transfer of low-energy phosphate groups from organic phosphate monoesters to free hydroxyl groups of various organic compounds. This chain is Class B acid phosphatase, found in Xenorhabdus bovienii (strain SS-2004) (Xenorhabdus nematophila subsp. bovienii).